An 808-amino-acid polypeptide reads, in one-letter code: Tegument protein UL47 homolog (808 aa).

Disordered stretches follow at residues 1–21 (MQMP…RENQ) and 77–266 (PNEE…SFGE). Over residues 83-92 (DNSRGRDRTR) the composition is skewed to basic and acidic residues. Basic residues predominate over residues 133 to 160 (SRARSRRRSSSRRRHRNASMHMHFRGGS). Over residues 162 to 171 (RSATGSQNLI) the composition is skewed to polar residues. Residues 197–214 (RSSRVRRRHRRSSRRRGP) are compositionally biased toward basic residues. The segment covering 235–259 (PISDIDQKRLRKNSDTSSRGTRESP) has biased composition (basic and acidic residues).

It belongs to the alphaherpesvirinae HHV-1 UL47 family. As to quaternary structure, interacts with US3 kinase. Interacts with UL31 and UL34; these interactions seem important for efficient virion nuclear egress. Interacts with UL41/VHS. Phosphorylated by US3. This phosphorylation is required for proper nuclear localization. In terms of processing, O-glycosylated.

The protein localises to the virion tegument. It localises to the host nucleus. It is found in the host cytoplasm. Tegument protein that can bind to various RNA transcripts. Plays a role in the attenuation of selective viral and cellular mRNA degradation by modulating the activity of host shutoff RNase UL41/VHS. Also plays a role in the primary envelopment of virions in the perinuclear space, probably by interacting with two nuclear egress proteins UL31 and UL34. Plays an important role in the splicing of glycoprotein/gC transcripts and thereby participates in bird-to-bird viral transmission. This Gallus gallus (Chicken) protein is Tegument protein UL47 homolog (MDV060).